Consider the following 413-residue polypeptide: Mitochondrial inner membrane magnesium transporter MFM1 (413 aa).

The transit peptide at methionine 1–aspartate 35 directs the protein to the mitochondrion. A glycan (N-linked (GlcNAc...) asparagine) is linked at asparagine 202. Residues leucine 329 to leucine 349 traverse the membrane as a helical segment. A YGMN motif is present at residues tyrosine 353–asparagine 356. Residues alanine 367–isoleucine 387 form a helical membrane-spanning segment.

It belongs to the CorA metal ion transporter (MIT) (TC 1.A.35) family. Forms homooligomers. Interacts with MRS2. Post-translationally, N-glycosylated. Glycosylation is important for correct localization of the protein.

The protein localises to the mitochondrion inner membrane. Its function is as follows. Mitochondrial inner membrane magnesium transporter required for mitochondrial magnesium homeostasis. Modulates the conductance of the MRS2 channel. Involved in the splicing of mRNA group II introns in mitochondria by affecting mitochondrial magnesium concentrations, which are critical for group II intron splicing. In Saccharomyces cerevisiae (strain ATCC 204508 / S288c) (Baker's yeast), this protein is Mitochondrial inner membrane magnesium transporter MFM1 (MFM1).